Here is a 359-residue protein sequence, read N- to C-terminus: Histidinol-phosphate aminotransferase (359 aa).

Residue Lys217 is modified to N6-(pyridoxal phosphate)lysine.

The protein belongs to the class-II pyridoxal-phosphate-dependent aminotransferase family. Histidinol-phosphate aminotransferase subfamily. In terms of assembly, homodimer. The cofactor is pyridoxal 5'-phosphate.

The enzyme catalyses L-histidinol phosphate + 2-oxoglutarate = 3-(imidazol-4-yl)-2-oxopropyl phosphate + L-glutamate. The protein operates within amino-acid biosynthesis; L-histidine biosynthesis; L-histidine from 5-phospho-alpha-D-ribose 1-diphosphate: step 7/9. The sequence is that of Histidinol-phosphate aminotransferase from Citrobacter koseri (strain ATCC BAA-895 / CDC 4225-83 / SGSC4696).